The primary structure comprises 476 residues: Glycogen synthase (476 aa).

ADP-alpha-D-glucose is bound at residue Lys-15.

Belongs to the glycosyltransferase 1 family. Bacterial/plant glycogen synthase subfamily.

It carries out the reaction [(1-&gt;4)-alpha-D-glucosyl](n) + ADP-alpha-D-glucose = [(1-&gt;4)-alpha-D-glucosyl](n+1) + ADP + H(+). It functions in the pathway glycan biosynthesis; glycogen biosynthesis. Synthesizes alpha-1,4-glucan chains using ADP-glucose. This chain is Glycogen synthase, found in Bacillus cereus (strain B4264).